The following is a 2090-amino-acid chain: MASAVSPANLPAVLLQPRWKRVVGWSGPVPRPRHGHRAVAIKELIVVFGGGNEGIVDELHVYNTATNQWFIPAVRGDIPPGCAAYGFVCDGTRLLVFGGMVEYGKYSNDLYELQASRWEWKRLKAKTPKNGPPPCPRLGHSFSLVGNKCYLFGGLANDSEDPKNNIPRYLNDLYILELRPGSGVVAWDIPITYGVLPPPRESHTAVVYTEKDNKKSKLVIYGGMSGCRLGDLWTLDIETLTWNKPSLSGVAPLPRSLHSATTIGNKMYVFGGWVPLVMDDVKVATHEKEWKCTNTLACLNLDTMAWETILMDTLEDNIPRARAGHCAVAINTRLYIWSGRDGYRKAWNNQVCCKDLWYLETEKPPPPARVQLVRANTNSLEVSWGAVATADSYLLQLQKYDIPATAATATSPTPNPVPSVPANPPKSPAPAAAAPAVQPLTQVGITLVPQAAAAPPSTTTIQVLPTVPGSSISVPTAARAQGVPAVLKVTGPQATTGTPLVTMRPAGQAGKAPVTVTSLPASVRMVVPTQSAQGTVIGSNPQMSGMAALAAAAAATQKIPPSSAPTVLSVPAGTTIVKTVAVTPGTTTLPATVKVASSPVMVSNPATRMLKTAAAQVGTSVSSAANTSTRPIITVHKSGTVTVAQQAQVVTTVVGGVTKTITLVKSPISVPGGSALISNLGKVMSVVQTKPVQTSAVTGQASTGPVTQIIQTKGPLPAGTILKLVTSADGKPTTIITTTQASGAGSKPTILGISSVSPSTTKPGTTTIIKTIPMSAIITQAGATGVTSTPGIKSPITIITTKVMTSGTGAPAKIITAVPKIATGHGQQGVTQVVLKGAPGQPGAILRTVPMSGVRLVTPVTVSAVKPAVTTLVVKGTTGVTTLGTVTGTVSTSLAGAGAHSTSASLATPITTLGTIATLSSQVINPTAITVSAAQTTLTAAGGLTTPTITMQPVSQPTQVTLITAPSGVEAQPVHDLPVSILASPTTEQPTATVTIADSGQGDVQPGTVTLVCSNPPCETHETGTTNTATTTVVANLGGHPQPTQVQFVCDRQEAAASLVTSAVGQQNGNVVRVCSNPPCETHETGTTNTATTATSNMAGQHGCSNPPCETHETGTTSTATTAMSSMGTGQQRDTRHTSSNPTVVRITVAPGALERTQGTVKPQCQTQQANMTNTTMTVQATRSPCPAGPLLRPSVALEAGNHSPAFVQLALPSVRVGLSGPSNKDMPTGHQLETYHTYTTNTPTTALSIMGAGELGTARLIPTSTYESLQASSPSSTMTMTALEALLCPSATVTQVCSNPPCETHETGTTNTATTSNAGSAQRVCSNPPCETHETGTTHTATTATSNGGAGQPEGGQQPAGGRPCETHQTTSTGTTMSVSVGALLPDATPSHGTLESGLEVVAVSTVTSQAGATLLASFPTQRVCSNPPCETHETGTTHTATTVTSNMSSNQDPPPAASDQGEVVSTQGDSANITSSSGITTTVSSTLPRAVTTVTQSTPVPGPSVPNISSLTETPGALTSEVPIPATITVTIANTETSDMPFSAVDILQPPEELQVSPGPRQQLPPRQLLQSASTPLMGESSEVLSASQTPELQAAVDLSSTGDPSSGQEPTSSAVVATVVVQPPPPTQSEVDQLSLPQELMAEAQAGTTTLMVTGLTPEELAVTAAAEAAAQAAATEEAQALAIQAVLQAAQQAVMAGTGEPMDTSEAAAAVTQAELGHLSAEGQEGQATTIPIVLTQQELAALVQQQQQLQEVQAQAQQQHHLPTEALAPADSLNDPSIESNCLNELASAVPSTVALLPSTATESLAPSNTFVAPQPVVVASPAKMQAAATLTEVDNGIESLGVKPDLPPPPSKAPVKKENQWFDVGVIKGTSVMVTHYFLPPDDAVQSDDDSGTIPDYNQLKKQELQPGTAYKFRVAGINACGRGPFSEISAFKTCLPGFPGAPCAIKISKSPDGAHLTWEPPSVTSGKIIEYSVYLAIQSSQAGGEPKSSTPAQLAFMRVYCGPSPSCLVQSSSLSNAHIDYTTKPAIIFRIAARNEKGYGPATQVRWLQETSKDSSGTKPASKRPMSSPEMKSAPKKSKADGQ.

The residue at position 2 (A2) is an N-acetylalanine. At S6 the chain carries Phosphoserine. 5 Kelch repeats span residues 44-89, 93-140, 148-194, 217-265, and 266-313; these read LIVV…GFVC, RLLV…RLGH, KCYL…ITYG, KLVI…TIGN, and KMYV…LMDT. Residues K105, K163, and K244 each participate in a glycyl lysine isopeptide (Lys-Gly) (interchain with G-Cter in ubiquitin) cross-link. K282 participates in a covalent cross-link: Glycyl lysine isopeptide (Lys-Gly) (interchain with G-Cter in SUMO2). K288 bears the N6-acetyllysine mark. Residue K363 forms a Glycyl lysine isopeptide (Lys-Gly) (interchain with G-Cter in ubiquitin) linkage. Positions 366 to 469 constitute a Fibronectin type-III 1 domain; sequence PPARVQLVRA…TIQVLPTVPG (104 aa). A disordered region spans residues 407–434; the sequence is ATATSPTPNPVPSVPANPPKSPAPAAAA. S411 is modified (phosphoserine). The span at 413–428 shows a compositional bias: pro residues; sequence TPNPVPSVPANPPKSP. A required for interaction with OGT region spans residues 500-550; sequence LVTMRPAGQAGKAPVTVTSLPASVRMVVPTQSAQGTVIGSNPQMSGMAALA. Omega-N-methylarginine occurs at positions 504 and 524. Phosphoserine occurs at positions 598, 666, and 669. The segment at 610–722 is interaction with SIN3A; it reads LKTAAAQVGT…KGPLPAGTIL (113 aa). An interaction with ZBTB17 region spans residues 750 to 902; it reads ILGISSVSPS…SLAGAGAHST (153 aa). An N6-acetyllysine modification is found at K813. Positions 813 to 912 are interaction with GABP2; sequence KIITAVPKIA…SASLATPITT (100 aa). 3 HCF repeat repeats span residues 1010–1035, 1072–1097, and 1101–1126; these read TLVC…TVVA, VRVC…ATSN, and QHGC…AMSS. Residues 1098–1140 form a disordered region; the sequence is MAGQHGCSNPPCETHETGTTSTATTAMSSMGTGQQRDTRHTSS. Residues 1114–1130 are compositionally biased toward low complexity; sequence TGTTSTATTAMSSMGTG. Residues 1157 to 1182 form an HCF repeat 4; degenerate repeat; the sequence is TQGTVKPQCQTQQANMTNTTMTVQAT. A Phosphoserine modification is found at S1204. R1216 is modified (asymmetric dimethylarginine). At S1223 the chain carries Phosphoserine. 2 HCF repeat repeats span residues 1295 to 1320 and 1323 to 1348; these read TQVC…SNAG and QRVC…ATSN. Disordered regions lie at residues 1302–1374 and 1444–1486; these read PCET…TTST and TVTS…TTVS. Over residues 1308-1321 the composition is skewed to low complexity; the sequence is TGTTNTATTSNAGS. The stretch at 1358-1383 is one HCF repeat 7; degenerate repeat; that stretch reads QQPAGGRPCETHQTTSTGTTMSVSVG. The stretch at 1423-1448 is one HCF repeat 8 repeat; the sequence is QRVCSNPPCETHETGTTHTATTVTSN. Residues 1465-1475 show a composition bias toward polar residues; the sequence is VVSTQGDSANI. Positions 1476–1486 are enriched in low complexity; that stretch reads TSSSGITTTVS. T1500 bears the Phosphothreonine mark. Residues S1506, S1559, and S1826 each carry the phosphoserine modification. Fibronectin type-III domains lie at 1853 to 1943 and 1945 to 2061; these read PPPP…TCLP and FPGA…TSKD. Glycyl lysine isopeptide (Lys-Gly) (interchain with G-Cter in ubiquitin) cross-links involve residues K1862 and K1863. S1893 carries the post-translational modification Phosphoserine. Positions 2049-2090 are disordered; that stretch reads ATQVRWLQETSKDSSGTKPASKRPMSSPEMKSAPKKSKADGQ. Residue K2060 is modified to N6-acetyllysine. K2079 participates in a covalent cross-link: Glycyl lysine isopeptide (Lys-Gly) (interchain with G-Cter in SUMO2).

Composed predominantly of six polypeptides ranging from 110 to 150 kDa and a minor 300 kDa polypeptide. The majority of N- and C-terminal cleavage products remain tightly, albeit non-covalently, associated. Interacts with POU2F1, CREB3, ZBTB17, EGR2, E2F4, CREBZF, SP1, GABP2, Sin3 HDAC complex (SIN3A, HDAC1, HDAC2, SUDS3), SAP30, SIN3B and FHL2. Component of a MLL1 complex, composed of at least the core components KMT2A/MLL1, ASH2L, HCFC1, WDR5 and RBBP5, as well as the facultative components BACC1, CHD8, DPY30, E2F6, HCFC2, HSP70, INO80C, KANSL1, LAS1L, MAX, MCRS1, MEN1, MGA, KAT8, PELP1, PHF20, PRP31, RING2, RUVBL1, RUVBL2, SENP3, TAF1, TAF4, TAF6, TAF7, TAF9 and TEX10. Component of a THAP1/THAP3-HCFC1-OGT complex that is required for the regulation of the transcriptional activity of RRM1. Interacts directly with THAP3 (via its HBM). Interacts (via the Kelch-repeat domain) with THAP1 (via the HBM); the interaction recruits HCHC1 to the RRM1. Interacts directly with OGT; the interaction, which requires the HCFC1 cleavage site domain, glycosylates and promotes the proteolytic processing of HCFC1 and retains OGT in the nucleus. Component of the SET1 complex, at least composed of the catalytic subunit (SETD1A or SETD1B), WDR5, WDR82, RBBP5, ASH2L, CXXC1, HCFC1 and DPY30. Component of the NSL complex at least composed of MOF/KAT8, KANSL1, KANSL2, KANSL3, MCRS1, PHF20, OGT1/OGT, WDR5 and HCFC1. Component of a complex at least composed of ZNF335, HCFC1, CCAR2, EMSY, MKI67, RBBP5, ASH2L and WDR5; the complex is formed as a result of interactions between components of a nuclear receptor-mediated transcription complex and a histone methylation complex. Within the complex interacts with ZNF335. Interacts with TET2 and TET3. Interacts with HCFC1R1. Interacts with THAP11. Interacts (via Kelch domain) with KMT2E (via HBM motif). Interacts with E2F1. Accessory scaffold component of the polycomb repressive deubiquitinase (PR-DUB) complex, at least composed of BAP1, one of ASXL1, ASXL2 or (probably) ASXL3 and one of MBD5 or MBD6; the PR-DUB core associates with a number of accessory proteins, including FOXK1, FOXK2, KDM1B, HCFC1, YY1 and OGT. Interacts with YY1 (via Gly-rich region); the interaction is direct. Interacts with BAP1 (via HBM-like motif). Proteolytically cleaved at one or several PPCE--THET sites within the HCF repeats. Cleavage is promoted by O-glycosylation. Further cleavage of the primary N- and C-terminal chains results in a 'trimming' and accumulation of the smaller chains. Cleavage is promoted by O-glycosylation. Post-translationally, O-glycosylated. GlcNAcylation by OGT promotes proteolytic processing. In terms of processing, ubiquitinated. Lys-1862 and Lys-1863 are ubiquitinated both via 'Lys-48'- and 'Lys-63'-linked polyubiquitin chains. BAP1 mediated deubiquitination of 'Lys-48'-linked polyubiquitin chains; deubiquitination by BAP1 does not seem to stabilize the protein.

Its subcellular location is the cytoplasm. The protein resides in the nucleus. In terms of biological role, transcriptional coregulator. Serves as a scaffold protein, bridging interactions between transcription factors, including THAP11 and ZNF143, and transcriptional coregulators. Involved in control of the cell cycle. Also antagonizes transactivation by ZBTB17 and GABP2; represses ZBTB17 activation of the p15(INK4b) promoter and inhibits its ability to recruit p300. Coactivator for EGR2 and GABP2. Tethers the chromatin modifying Set1/Ash2 histone H3 'Lys-4' methyltransferase (H3K4me) and Sin3 histone deacetylase (HDAC) complexes (involved in the activation and repression of transcription respectively) together. As part of the NSL complex it may be involved in acetylation of nucleosomal histone H4 on several lysine residues. Recruits KMT2E to E2F1 responsive promoters promoting transcriptional activation and thereby facilitates G1 to S phase transition. Modulates expression of homeobox protein PDX1, perhaps acting in concert with transcription factor E2F1, thereby regulating pancreatic beta-cell growth and glucose-stimulated insulin secretion. May negatively modulate transcriptional activity of FOXO3. The chain is Host cell factor 1 from Mesocricetus auratus (Golden hamster).